Consider the following 327-residue polypeptide: Tryptophan--tRNA ligase (327 aa).

ATP contacts are provided by residues glutamine 9–serine 11 and glycine 17–asparagine 18. The 'HIGH' region signature appears at proline 10 to asparagine 18. Aspartate 132 serves as a coordination point for L-tryptophan. Residues glycine 144 to aspartate 146, isoleucine 183, and lysine 192 to serine 196 contribute to the ATP site. A 'KMSKS' region motif is present at residues lysine 192–serine 196.

This sequence belongs to the class-I aminoacyl-tRNA synthetase family. As to quaternary structure, homodimer.

It localises to the cytoplasm. It carries out the reaction tRNA(Trp) + L-tryptophan + ATP = L-tryptophyl-tRNA(Trp) + AMP + diphosphate + H(+). Its function is as follows. Catalyzes the attachment of tryptophan to tRNA(Trp). This Caldanaerobacter subterraneus subsp. tengcongensis (strain DSM 15242 / JCM 11007 / NBRC 100824 / MB4) (Thermoanaerobacter tengcongensis) protein is Tryptophan--tRNA ligase.